Consider the following 133-residue polypeptide: Large ribosomal subunit protein bL20 (133 aa).

This sequence belongs to the bacterial ribosomal protein bL20 family.

Binds directly to 23S ribosomal RNA and is necessary for the in vitro assembly process of the 50S ribosomal subunit. It is not involved in the protein synthesizing functions of that subunit. The chain is Large ribosomal subunit protein bL20 from Rubrobacter xylanophilus (strain DSM 9941 / JCM 11954 / NBRC 16129 / PRD-1).